We begin with the raw amino-acid sequence, 181 residues long: Protein GrpE (181 aa).

It belongs to the GrpE family. As to quaternary structure, homodimer.

The protein resides in the cytoplasm. Functionally, participates actively in the response to hyperosmotic and heat shock by preventing the aggregation of stress-denatured proteins, in association with DnaK and GrpE. It is the nucleotide exchange factor for DnaK and may function as a thermosensor. Unfolded proteins bind initially to DnaJ; upon interaction with the DnaJ-bound protein, DnaK hydrolyzes its bound ATP, resulting in the formation of a stable complex. GrpE releases ADP from DnaK; ATP binding to DnaK triggers the release of the substrate protein, thus completing the reaction cycle. Several rounds of ATP-dependent interactions between DnaJ, DnaK and GrpE are required for fully efficient folding. This chain is Protein GrpE, found in Verminephrobacter eiseniae (strain EF01-2).